Here is a 105-residue protein sequence, read N- to C-terminus: Large ribosomal subunit protein bL34m (105 aa).

The N-terminal 16 residues, 1-16 (MPLFARLCQPQSRRMF), are a transit peptide targeting the mitochondrion.

The protein belongs to the bacterial ribosomal protein bL34 family. As to quaternary structure, component of the mitochondrial large ribosomal subunit (mt-LSU). Mature yeast 74S mitochondrial ribosomes consist of a small (37S) and a large (54S) subunit. The 37S small subunit contains a 15S ribosomal RNA (15S mt-rRNA) and 34 different proteins. The 54S large subunit contains a 21S rRNA (21S mt-rRNA) and 46 different proteins.

The protein localises to the mitochondrion. In terms of biological role, component of the mitochondrial ribosome (mitoribosome), a dedicated translation machinery responsible for the synthesis of mitochondrial genome-encoded proteins, including at least some of the essential transmembrane subunits of the mitochondrial respiratory chain. The mitoribosomes are attached to the mitochondrial inner membrane and translation products are cotranslationally integrated into the membrane. This is Large ribosomal subunit protein bL34m from Saccharomyces cerevisiae (strain ATCC 204508 / S288c) (Baker's yeast).